The sequence spans 457 residues: Argininosuccinate lyase (457 aa).

This sequence belongs to the lyase 1 family. Argininosuccinate lyase subfamily.

It localises to the cytoplasm. The catalysed reaction is 2-(N(omega)-L-arginino)succinate = fumarate + L-arginine. It functions in the pathway amino-acid biosynthesis; L-arginine biosynthesis; L-arginine from L-ornithine and carbamoyl phosphate: step 3/3. The chain is Argininosuccinate lyase from Shigella dysenteriae serotype 1 (strain Sd197).